A 430-amino-acid polypeptide reads, in one-letter code: uncharacterized protein (430 aa).

This is an uncharacterized protein from Bos taurus (Bovine).